Here is a 600-residue protein sequence, read N- to C-terminus: Aspartate--tRNA(Asp/Asn) ligase (600 aa).

Glu174 is an L-aspartate binding site. An aspartate region spans residues 198–201; that stretch reads QLFK. Arg220 is a binding site for L-aspartate. ATP-binding positions include 220 to 222 and Gln229; that span reads RDE. L-aspartate is bound at residue His457. Glu491 contributes to the ATP binding site. Position 498 (Arg498) interacts with L-aspartate. 543-546 provides a ligand contact to ATP; that stretch reads GLDR.

It belongs to the class-II aminoacyl-tRNA synthetase family. Type 1 subfamily. Homodimer.

The protein localises to the cytoplasm. The catalysed reaction is tRNA(Asx) + L-aspartate + ATP = L-aspartyl-tRNA(Asx) + AMP + diphosphate. Its function is as follows. Aspartyl-tRNA synthetase with relaxed tRNA specificity since it is able to aspartylate not only its cognate tRNA(Asp) but also tRNA(Asn). Reaction proceeds in two steps: L-aspartate is first activated by ATP to form Asp-AMP and then transferred to the acceptor end of tRNA(Asp/Asn). The polypeptide is Aspartate--tRNA(Asp/Asn) ligase (Burkholderia orbicola (strain AU 1054)).